Consider the following 360-residue polypeptide: DNA replication and repair protein RecF (360 aa).

Residue 30 to 37 (GVNGAGKT) coordinates ATP.

It belongs to the RecF family.

The protein localises to the cytoplasm. The RecF protein is involved in DNA metabolism; it is required for DNA replication and normal SOS inducibility. RecF binds preferentially to single-stranded, linear DNA. It also seems to bind ATP. The sequence is that of DNA replication and repair protein RecF from Thioalkalivibrio sulfidiphilus (strain HL-EbGR7).